Consider the following 822-residue polypeptide: MASASAAAETLAAASLPVASPSRSLLRPLPRRASAGGGCSASVRISAVPPRGLGFAVVQRRVLRRPPAARANVEREGDGAEASGPGEASSSSSGDGDRDGAAAAAEAGGDGASTSTTSAAATPPQPPSSKRGENKWRRKLIKGGGVGRWLWEPIVQGREMGFLLLQLGFAIFALRMLRPEIALPGSEPRPQTTYVSVPYSDFLASIDKNQVKKVEVDGVHIMFRLRPEVEARAMEQPQVQRGTDSVADNAGVPRRIVFTTTRPVDIKTPYEKMVENSVEFGSPDKRSGGLLNSALVALIYVVLIAVVLQRLPISFSQHSAGQLRNRKNSNSGGAKVSESTDIVTFADVAGVDEAKEELEEIVEFLRNPERYIRLGARPPRGVLLVGLPGTGKTLLAKAVAGEAEVPFISCSASEFVELYVGMGAARVRDLFARAKKESPSIIFIDEIDAVAKSRDGRYRIVSNDEREQTLNQLLTEMDGFDTNSAVIVLGATNRADVLDPALRRPGRFDRVVMVEAPDRFGRESILKVHVSRKELPLGKDVDLSDIAAMTTGFTGADLANLVNEAALLAGRSNKEIVEKIDFICAVERSIAGIEKKHAKLKGNEKAVVARHEVGHAVVGTAVANLLPGQPRVEKLSILPRSGGALGFTYTPPTTEDRYLLFVDELRGRLVTLLGGRAAEEVVLSGRVSTGALDDIRRATDMAYKAVAEYGLNQRIGPISVATLSNGGLDESGGSPWGRDQGHLVDLVQREVKALLQSALDVALSVVRANPTVLEGLGAYLEENEKVEGEELQEWLKSVVAPKELTSFIRGKQEQVLQLEAGS.

3 stretches are compositionally biased toward low complexity: residues 1–34 (MASA…RRAS), 80–94 (AEAS…SSSG), and 101–122 (AAAA…AAAT). Disordered regions lie at residues 1–44 (MASA…ASVR) and 67–136 (PAAR…ENKW). Residues 1 to 70 (MASASAAAET…RVLRRPPAAR (70 aa)) constitute a chloroplast transit peptide. The next 2 membrane-spanning stretches (helical) occupy residues 154 to 174 (IVQG…IFAL) and 288 to 308 (GGLL…AVVL). 386–393 (GLPGTGKT) provides a ligand contact to ATP. Zn(2+) is bound at residue His-611. Glu-612 is an active-site residue. The Zn(2+) site is built by His-615 and Asp-694.

It in the N-terminal section; belongs to the AAA ATPase family. The protein in the C-terminal section; belongs to the peptidase M41 family. Zn(2+) serves as cofactor.

The protein localises to the plastid. The protein resides in the chloroplast thylakoid membrane. Its function is as follows. Probable ATP-dependent zinc metallopeptidase. The protein is ATP-dependent zinc metalloprotease FTSH 7, chloroplastic (FTSH7) of Oryza sativa subsp. japonica (Rice).